Here is a 273-residue protein sequence, read N- to C-terminus: Cell division protein ZipA (273 aa).

Methionine 1 is a topological domain (periplasmic). The chain crosses the membrane as a helical span at residues glutamate 2–phenylalanine 22. The Cytoplasmic portion of the chain corresponds to aspartate 23–arginine 273. Residues glutamate 65–serine 125 are disordered. Over residues valine 111–lysine 120 the composition is skewed to basic and acidic residues.

The protein belongs to the ZipA family. Interacts with FtsZ via their C-terminal domains.

Its subcellular location is the cell inner membrane. In terms of biological role, essential cell division protein that stabilizes the FtsZ protofilaments by cross-linking them and that serves as a cytoplasmic membrane anchor for the Z ring. Also required for the recruitment to the septal ring of downstream cell division proteins. This is Cell division protein ZipA from Ectopseudomonas mendocina (strain ymp) (Pseudomonas mendocina).